A 303-amino-acid chain; its full sequence is UDP-3-O-acyl-N-acetylglucosamine deacetylase (303 aa).

Histidine 79, histidine 238, and aspartate 242 together coordinate Zn(2+). Catalysis depends on histidine 265, which acts as the Proton donor.

It belongs to the LpxC family. Zn(2+) is required as a cofactor.

It carries out the reaction a UDP-3-O-[(3R)-3-hydroxyacyl]-N-acetyl-alpha-D-glucosamine + H2O = a UDP-3-O-[(3R)-3-hydroxyacyl]-alpha-D-glucosamine + acetate. Its pathway is glycolipid biosynthesis; lipid IV(A) biosynthesis; lipid IV(A) from (3R)-3-hydroxytetradecanoyl-[acyl-carrier-protein] and UDP-N-acetyl-alpha-D-glucosamine: step 2/6. Its function is as follows. Catalyzes the hydrolysis of UDP-3-O-myristoyl-N-acetylglucosamine to form UDP-3-O-myristoylglucosamine and acetate, the committed step in lipid A biosynthesis. This Pseudoalteromonas translucida (strain TAC 125) protein is UDP-3-O-acyl-N-acetylglucosamine deacetylase.